A 579-amino-acid chain; its full sequence is Isocitrate dehydrogenase kinase/phosphatase (579 aa).

ATP is bound by residues 324-330 (ADGTPGM) and Lys345. Residue Asp380 is part of the active site.

Belongs to the AceK family.

The protein resides in the cytoplasm. It catalyses the reaction L-seryl-[isocitrate dehydrogenase] + ATP = O-phospho-L-seryl-[isocitrate dehydrogenase] + ADP + H(+). Functionally, bifunctional enzyme which can phosphorylate or dephosphorylate isocitrate dehydrogenase (IDH) on a specific serine residue. This is a regulatory mechanism which enables bacteria to bypass the Krebs cycle via the glyoxylate shunt in response to the source of carbon. When bacteria are grown on glucose, IDH is fully active and unphosphorylated, but when grown on acetate or ethanol, the activity of IDH declines drastically concomitant with its phosphorylation. This is Isocitrate dehydrogenase kinase/phosphatase from Xanthomonas campestris pv. campestris (strain 8004).